We begin with the raw amino-acid sequence, 324 residues long: Methenyltetrahydromethanopterin cyclohydrolase (324 aa).

Belongs to the MCH family.

It is found in the cytoplasm. The enzyme catalyses 5,10-methenyl-5,6,7,8-tetrahydromethanopterin + H2O = N(5)-formyl-5,6,7,8-tetrahydromethanopterin + H(+). The protein operates within one-carbon metabolism; formaldehyde degradation; formate from formaldehyde (H(4)MPT route): step 3/5. In terms of biological role, catalyzes the hydrolysis of methenyl-H(4)MPT(+) to 5-formyl-H(4)MPT. This is Methenyltetrahydromethanopterin cyclohydrolase from Methylobacterium sp. (strain 4-46).